Reading from the N-terminus, the 459-residue chain is Cysteine--tRNA ligase (459 aa).

Cys28 is a Zn(2+) binding site. The short motif at 30–40 (VTIYDLCHIGH) is the 'HIGH' region element. 3 residues coordinate Zn(2+): Cys209, His234, and Glu238. Positions 266–270 (KMSKS) match the 'KMSKS' region motif. Lys269 is an ATP binding site.

It belongs to the class-I aminoacyl-tRNA synthetase family. As to quaternary structure, monomer. It depends on Zn(2+) as a cofactor.

The protein resides in the cytoplasm. The enzyme catalyses tRNA(Cys) + L-cysteine + ATP = L-cysteinyl-tRNA(Cys) + AMP + diphosphate. This is Cysteine--tRNA ligase from Shewanella piezotolerans (strain WP3 / JCM 13877).